The chain runs to 203 residues: uncharacterized protein (203 aa).

The first 20 residues, 1–20 (MDELILPILILLFLVFVAYF), serve as a signal peptide directing secretion.

This is an uncharacterized protein from Pasteurella multocida (strain Pm70).